Reading from the N-terminus, the 235-residue chain is MIFNVLTIFPDMFPGPLGYSTVGNALRKGLWSLNVVDIRSFASDKHSTVDDKPYGGGPGMLMKADVLGRCIDSVLEAHPDTRLIYTSPKGKQFTQDMSRQIVHFGNITLLCGRFEGIDERVVDVYNFQEVSIGDYVISGGELAAMVVIDSCVRMVTGVIGNKDSLNRESFDCGLEYPQYTRPASWKGVSVPDVLLRGNHKETELWRCKMSRIITERRRPDLLKDCGGEEEGSSNE.

S-adenosyl-L-methionine-binding positions include Gly112 and 132-137 (IGDYVI).

Belongs to the RNA methyltransferase TrmD family. Homodimer.

It localises to the cytoplasm. It catalyses the reaction guanosine(37) in tRNA + S-adenosyl-L-methionine = N(1)-methylguanosine(37) in tRNA + S-adenosyl-L-homocysteine + H(+). In terms of biological role, specifically methylates guanosine-37 in various tRNAs. The chain is tRNA (guanine-N(1)-)-methyltransferase from Anaplasma marginale (strain St. Maries).